A 455-amino-acid chain; its full sequence is Glutamyl-tRNA reductase (455 aa).

Residues 49–52, Ser109, 114–116, and Gln120 contribute to the substrate site; these read TCNR and ETQ. Cys50 serves as the catalytic Nucleophile. 189–194 provides a ligand contact to NADP(+); that stretch reads GAGKMG.

This sequence belongs to the glutamyl-tRNA reductase family. In terms of assembly, homodimer.

It carries out the reaction (S)-4-amino-5-oxopentanoate + tRNA(Glu) + NADP(+) = L-glutamyl-tRNA(Glu) + NADPH + H(+). Its pathway is porphyrin-containing compound metabolism; protoporphyrin-IX biosynthesis; 5-aminolevulinate from L-glutamyl-tRNA(Glu): step 1/2. Functionally, catalyzes the NADPH-dependent reduction of glutamyl-tRNA(Glu) to glutamate 1-semialdehyde (GSA). The polypeptide is Glutamyl-tRNA reductase (Bacillus pumilus (strain SAFR-032)).